The primary structure comprises 507 residues: Capsid vertex component 1 (507 aa).

Residues 219 to 257 (AAAETSVSKHHPALENPSNIRGSAGGEGGGGRAGTGGTV) form a disordered region. Gly residues predominate over residues 241 to 257 (SAGGEGGGGRAGTGGTV).

It belongs to the herpesviridae CVC1 protein family. Interacts (via C-terminus) with capsid vertex component 2/CVC2.

Its subcellular location is the virion. The protein resides in the host nucleus. Its function is as follows. Capsid vertex-specific component that plays a role during viral DNA encapsidation, assuring correct genome cleavage and presumably stabilizing capsids that contain full-length viral genomes. This chain is Capsid vertex component 1, found in Epstein-Barr virus (strain B95-8) (HHV-4).